Consider the following 226-residue polypeptide: Peroxiredoxin-like 2C (226 aa).

It belongs to the peroxiredoxin-like PRXL2 family. PRXL2C subfamily. In terms of tissue distribution, expressed in gastric tissues.

May positively regulate ERK1/2 signaling and AKT1 activation leading to HIF1A up-regulation with an increased expression of glycolysis genes and enhanced glycolysis. This is Peroxiredoxin-like 2C from Homo sapiens (Human).